The primary structure comprises 271 residues: Ribosomal RNA small subunit methyltransferase A (271 aa).

S-adenosyl-L-methionine contacts are provided by His-11, Leu-13, Gly-38, Glu-58, Asp-86, and Asn-101.

Belongs to the class I-like SAM-binding methyltransferase superfamily. rRNA adenine N(6)-methyltransferase family. RsmA subfamily.

Its subcellular location is the cytoplasm. It carries out the reaction adenosine(1518)/adenosine(1519) in 16S rRNA + 4 S-adenosyl-L-methionine = N(6)-dimethyladenosine(1518)/N(6)-dimethyladenosine(1519) in 16S rRNA + 4 S-adenosyl-L-homocysteine + 4 H(+). Its function is as follows. Specifically dimethylates two adjacent adenosines (A1518 and A1519) in the loop of a conserved hairpin near the 3'-end of 16S rRNA in the 30S particle. May play a critical role in biogenesis of 30S subunits. This is Ribosomal RNA small subunit methyltransferase A from Helicobacter pylori (strain Shi470).